We begin with the raw amino-acid sequence, 190 residues long: Small ribosomal subunit protein uS4 (190 aa).

Residues 105–181 (RRLQTLVYKL…RKKAKAAEGG (77 aa)) enclose the S4 RNA-binding domain. The tract at residues 163–190 (GGGRPGRVRRKKAKAAEGGDGDAEEDEE) is disordered. Acidic residues predominate over residues 181–190 (GDGDAEEDEE).

The protein belongs to the universal ribosomal protein uS4 family.

The sequence is that of Small ribosomal subunit protein uS4 (RPS9) from Podospora anserina (Pleurage anserina).